Consider the following 340-residue polypeptide: L-threonine 3-dehydrogenase (340 aa).

A Zn(2+)-binding site is contributed by C38. Residues T40 and H43 each act as charge relay system in the active site. Residues H63, E64, C93, C96, C99, and C107 each contribute to the Zn(2+) site. Residues I175, D195, R200, 262-264 (LGI), and 286-287 (IY) each bind NAD(+).

Belongs to the zinc-containing alcohol dehydrogenase family. Homotetramer. Zn(2+) serves as cofactor.

It localises to the cytoplasm. It catalyses the reaction L-threonine + NAD(+) = (2S)-2-amino-3-oxobutanoate + NADH + H(+). It functions in the pathway amino-acid degradation; L-threonine degradation via oxydo-reductase pathway; glycine from L-threonine: step 1/2. Catalyzes the NAD(+)-dependent oxidation of L-threonine to 2-amino-3-ketobutyrate. The polypeptide is L-threonine 3-dehydrogenase (Legionella pneumophila subsp. pneumophila (strain Philadelphia 1 / ATCC 33152 / DSM 7513)).